Consider the following 459-residue polypeptide: Interleukin-7 receptor subunit alpha (459 aa).

The signal sequence occupies residues 1 to 20; the sequence is MTILGTTFGMVFSLLQVVSG. Residues 21–239 lie on the Extracellular side of the membrane; it reads ESGYAQNGDL…EINNSSGEMD (219 aa). Residues cysteine 42 and cysteine 57 are joined by a disulfide bond. 2 N-linked (GlcNAc...) asparagine glycosylation sites follow: asparagine 49 and asparagine 65. Cystine bridges form between cysteine 74/cysteine 82 and cysteine 108/cysteine 118. Residues 131–231 form the Fibronectin type-III domain; the sequence is APFDLSVVYR…PSYYFRTPEI (101 aa). N-linked (GlcNAc...) asparagine glycans are attached at residues asparagine 151 and asparagine 182. The WSXWS motif signature appears at 217–221; the sequence is WSEWS. 2 N-linked (GlcNAc...) asparagine glycosylation sites follow: asparagine 232 and asparagine 233. The chain crosses the membrane as a helical span at residues 240–264; the sequence is PILLTISILSFFSVALLVILACVLW. The Cytoplasmic segment spans residues 265–459; sequence KKRIKPIVWP…VTMSSFYQNQ (195 aa). The Box 1 motif signature appears at 272–280; that stretch reads VWPSLPDHK. Position 282 is a phosphothreonine; by PKC (threonine 282).

Belongs to the type I cytokine receptor family. Type 4 subfamily. The IL7 receptor is a heterodimer of IL7R and IL2RG. The TSLP receptor is a heterodimer of CRLF2 and IL7R. Interacts with CD53. N-glycosylated IL-7Ralpha binds IL7 300-fold more tightly than the unglycosylated form. Post-translationally, ubiquitinated by MARCHF8; leading to lysosomal degradation.

The protein localises to the cell membrane. The protein resides in the secreted. Its function is as follows. Receptor for interleukin-7. Also acts as a receptor for thymic stromal lymphopoietin (TSLP). This Homo sapiens (Human) protein is Interleukin-7 receptor subunit alpha (IL7R).